Consider the following 204-residue polypeptide: General stress protein Ctc (204 aa).

Residues 177-204 (ILPPQQQEAAEVDEEESADAQPEGENEQ) form a disordered region. The span at 186 to 204 (AEVDEEESADAQPEGENEQ) shows a compositional bias: acidic residues.

This sequence belongs to the bacterial ribosomal protein bL25 family. CTC subfamily. In terms of assembly, part of the ribosome (presumably the 50S subunit) under heat-stress but not control growth conditions. Binds 5S rRNA.

Not required for exponential growth; probably functions in vegetatively growing cells, maybe required for accurate translation under stress conditions. The sequence is that of General stress protein Ctc from Bacillus subtilis (strain 168).